The following is a 647-amino-acid chain: Chaperone protein DnaK (647 aa).

Threonine 198 is modified (phosphothreonine; by autocatalysis). 3 stretches are compositionally biased toward basic and acidic residues: residues 514-529 (AEAN…ESVD), 540-557 (STEK…DADK), and 600-622 (SQEK…KDDN). 2 disordered regions span residues 514–557 (AEAN…DADK) and 596–647 (AIYK…EKSA). Acidic residues predominate over residues 623-632 (VVDADFEEVK). Residues 633–647 (EESKEGKEEDKEKSA) show a composition bias toward basic and acidic residues.

It belongs to the heat shock protein 70 family.

Functionally, acts as a chaperone. This is Chaperone protein DnaK from Pelagibacter ubique (strain HTCC1062).